A 294-amino-acid polypeptide reads, in one-letter code: 1D-myo-inositol 2-acetamido-2-deoxy-alpha-D-glucopyranoside deacetylase (294 aa).

Residues His-13, Asp-16, and His-148 each coordinate Zn(2+).

It belongs to the MshB deacetylase family. The cofactor is Zn(2+).

The enzyme catalyses 1D-myo-inositol 2-acetamido-2-deoxy-alpha-D-glucopyranoside + H2O = 1D-myo-inositol 2-amino-2-deoxy-alpha-D-glucopyranoside + acetate. Its function is as follows. Catalyzes the deacetylation of 1D-myo-inositol 2-acetamido-2-deoxy-alpha-D-glucopyranoside (GlcNAc-Ins) in the mycothiol biosynthesis pathway. The polypeptide is 1D-myo-inositol 2-acetamido-2-deoxy-alpha-D-glucopyranoside deacetylase (Geodermatophilus obscurus (strain ATCC 25078 / DSM 43160 / JCM 3152 / CCUG 61914 / KCC A-0152 / KCTC 9177 / NBRC 13315 / NRRL B-3577 / G-20)).